The chain runs to 227 residues: CDP-diacylglycerol--inositol 3-phosphatidyltransferase 1 (227 aa).

The next 2 helical transmembrane spans lie at 12 to 36 (LSVYLYIPNIVGYMRVLLNCVAFAV) and 42 to 61 (PLFSVLYFFSFCCDAVDGWV). Asp55 and Asp58 together coordinate Mg(2+). Residues Gly59, Arg63, and Ser69 each coordinate a CDP-1,2-diacyl-sn-glycerol. Helical transmembrane passes span 73 to 95 (AVLDMVTDRVSTACLLVILSQIY), 101 to 122 (FLSLLALDIASHWLQMYSTFLA), 142 to 165 (YGNRIFMCYCCVSCEVLYIILLLI), and 177 to 200 (VVATLTQISPLSFLLALTLFGWSM). Mg(2+) is bound by residues Asp76 and Asp80. Residue Asp80 is the Proton acceptor of the active site.

This sequence belongs to the CDP-alcohol phosphatidyltransferase class-I family. It depends on Mg(2+) as a cofactor. The cofactor is Mn(2+). As to expression, expressed in stems, flowers, shoots and roots. Present in epidermal tissues.

It localises to the membrane. The catalysed reaction is a CDP-1,2-diacyl-sn-glycerol + myo-inositol = a 1,2-diacyl-sn-glycero-3-phospho-(1D-myo-inositol) + CMP + H(+). In terms of biological role, catalyzes the biosynthesis of phosphatidylinositol (PtdIns) as well as PtdIns:inositol exchange reaction. May thus act to reduce an excessive cellular PtdIns content. The exchange activity is due to the reverse reaction of PtdIns synthase and is dependent on CMP, which is tightly bound to the enzyme. This chain is CDP-diacylglycerol--inositol 3-phosphatidyltransferase 1 (PIS1), found in Arabidopsis thaliana (Mouse-ear cress).